Here is a 404-residue protein sequence, read N- to C-terminus: cAMP-dependent protein kinase regulatory subunit (404 aa).

The dimerization and phosphorylation stretch occupies residues 14-144 (LTDHELLRIP…RLKTAIAGNF (131 aa)). Serine 105 is modified (phosphoserine). Residues 145-276 (LFSH…EKFP), glutamate 223, arginine 232, 277-398 (CCRH…GVEE), glutamate 344, and arginine 353 contribute to the 3',5'-cyclic AMP site.

It belongs to the cAMP-dependent kinase regulatory chain family. Tetramer, composed of 2 regulatory (R) and 2 catalytic (C) subunits. In the presence of cAMP it dissociates into 2 active monomeric C subunits and an R dimer.

In terms of biological role, cAMP-dependent protein kinase PKA regulatory subunit. This is cAMP-dependent protein kinase regulatory subunit (PKAR) from Colletotrichum trifolii.